The sequence spans 409 residues: Failed axon connections homolog (409 aa).

Residues 68-88 (YLTGGALLAAAAYLLHELLVI) form a helical membrane-spanning segment. Residues 372-393 (DEGAENSFSRTPDTDFTGHSLF) form a disordered region.

Belongs to the FAX family.

Its subcellular location is the membrane. In terms of biological role, may play a role in axonal development. The polypeptide is Failed axon connections homolog (Faxc) (Mus musculus (Mouse)).